A 275-amino-acid polypeptide reads, in one-letter code: Large ribosomal subunit protein uL2 (275 aa).

The interval 224 to 275 is disordered; it reads AMNPVDHPHGGGEAKAGQGNPHPVTPWGVPTKGYKTRKNKRTQQFIVRDRRG.

Belongs to the universal ribosomal protein uL2 family. As to quaternary structure, part of the 50S ribosomal subunit. Forms a bridge to the 30S subunit in the 70S ribosome.

Its function is as follows. One of the primary rRNA binding proteins. Required for association of the 30S and 50S subunits to form the 70S ribosome, for tRNA binding and peptide bond formation. It has been suggested to have peptidyltransferase activity; this is somewhat controversial. Makes several contacts with the 16S rRNA in the 70S ribosome. This is Large ribosomal subunit protein uL2 from Xanthomonas oryzae pv. oryzae (strain MAFF 311018).